Consider the following 816-residue polypeptide: Leucine--tRNA ligase (816 aa).

Positions 40 to 51 (SYPSGSQLHAGH) match the 'HIGH' region motif. A 'KMSKS' region motif is present at residues 576-580 (KMSKS). Lys-579 contacts ATP.

Belongs to the class-I aminoacyl-tRNA synthetase family.

It localises to the cytoplasm. It carries out the reaction tRNA(Leu) + L-leucine + ATP = L-leucyl-tRNA(Leu) + AMP + diphosphate. In Clostridium perfringens (strain ATCC 13124 / DSM 756 / JCM 1290 / NCIMB 6125 / NCTC 8237 / Type A), this protein is Leucine--tRNA ligase.